Consider the following 909-residue polypeptide: Protein translocase subunit SecA (909 aa).

ATP contacts are provided by residues Gln87, 105–109 (GEGKT), and Asp514. The tract at residues 879–909 (TPVQGGPKVGRNDPCPCGSGKKYKHCHGKLS) is disordered. 4 residues coordinate Zn(2+): Cys893, Cys895, Cys904, and His905. Residues 899-909 (KKYKHCHGKLS) are compositionally biased toward basic residues.

Belongs to the SecA family. Monomer and homodimer. Part of the essential Sec protein translocation apparatus which comprises SecA, SecYEG and auxiliary proteins SecDF-YajC and YidC. Requires Zn(2+) as cofactor.

The protein resides in the cell inner membrane. It localises to the cytoplasm. It carries out the reaction ATP + H2O + cellular proteinSide 1 = ADP + phosphate + cellular proteinSide 2.. In terms of biological role, part of the Sec protein translocase complex. Interacts with the SecYEG preprotein conducting channel. Has a central role in coupling the hydrolysis of ATP to the transfer of proteins into and across the cell membrane, serving both as a receptor for the preprotein-SecB complex and as an ATP-driven molecular motor driving the stepwise translocation of polypeptide chains across the membrane. The protein is Protein translocase subunit SecA of Azoarcus sp. (strain BH72).